A 121-amino-acid polypeptide reads, in one-letter code: Large ribosomal subunit protein bL12 (121 aa).

This sequence belongs to the bacterial ribosomal protein bL12 family. Homodimer. Part of the ribosomal stalk of the 50S ribosomal subunit. Forms a multimeric L10(L12)X complex, where L10 forms an elongated spine to which 2 to 4 L12 dimers bind in a sequential fashion. Binds GTP-bound translation factors.

Forms part of the ribosomal stalk which helps the ribosome interact with GTP-bound translation factors. Is thus essential for accurate translation. The sequence is that of Large ribosomal subunit protein bL12 from Shewanella pealeana (strain ATCC 700345 / ANG-SQ1).